We begin with the raw amino-acid sequence, 86 residues long: Protein Tat (86 aa).

The disordered stretch occupies residues 1-21 (MDPVDPNLEPWNHPGSQPKTA). Positions 1–24 (MDPVDPNLEPWNHPGSQPKTACNR) are interaction with human CREBBP. The interval 1 to 48 (MDPVDPNLEPWNHPGSQPKTACNRCHCKKCCYHCQVCFITKGLGISYG) is transactivation. Residues Cys-22, Cys-25, and Cys-27 each coordinate Zn(2+). The cysteine-rich stretch occupies residues 22 to 37 (CNRCHCKKCCYHCQVC). Position 28 is an N6-acetyllysine; by host PCAF (Lys-28). Zn(2+)-binding residues include Cys-30, His-33, Cys-34, and Cys-37. The interval 38 to 48 (FITKGLGISYG) is core. The segment at 47 to 86 (YGRKKRRQRRRPSQGGQTHQDPIPKQPSSQPRGNPTGPKE) is disordered. A compositionally biased stretch (basic residues) spans 48–58 (GRKKRRQRRRP). Positions 49-57 (RKKRRQRRR) match the Nuclear localization signal, RNA-binding (TAR), and protein transduction motif. The segment at 49 to 86 (RKKRRQRRRPSQGGQTHQDPIPKQPSSQPRGNPTGPKE) is interaction with the host capping enzyme RNGTT. Residues Lys-50 and Lys-51 each carry the N6-acetyllysine; by host EP300 and GCN5L2 modification. Residues Arg-52 and Arg-53 each carry the asymmetric dimethylarginine; by host PRMT6 modification. The segment covering 60 to 79 (QGGQTHQDPIPKQPSSQPRG) has biased composition (polar residues). A Glycyl lysine isopeptide (Lys-Gly) (interchain with G-Cter in ubiquitin) cross-link involves residue Lys-71.

This sequence belongs to the lentiviruses Tat family. As to quaternary structure, interacts with host CCNT1. Associates with the P-TEFb complex composed at least of Tat, P-TEFb (CDK9 and CCNT1), TAR RNA, RNA Pol II. Recruits the HATs CREBBP, TAF1/TFIID, EP300, PCAF and GCN5L2. Interacts with host KAT5/Tip60; this interaction targets the latter to degradation. Interacts with the host deacetylase SIRT1. Interacts with host capping enzyme RNGTT; this interaction stimulates RNGTT. Binds to host KDR, and to the host integrins ITGAV/ITGB3 and ITGA5/ITGB1. Interacts with host KPNB1/importin beta-1 without previous binding to KPNA1/importin alpha-1. Interacts with EIF2AK2. Interacts with host nucleosome assembly protein NAP1L1; this interaction may be required for the transport of Tat within the nucleus, since the two proteins interact at the nuclear rim. Interacts with host C1QBP/SF2P32; this interaction involves lysine-acetylated Tat. Interacts with the host chemokine receptors CCR2, CCR3 and CXCR4. Interacts with host DPP4/CD26; this interaction may trigger an anti-proliferative effect. Interacts with host LDLR. Interacts with the host extracellular matrix metalloproteinase MMP1. Interacts with host PRMT6; this interaction mediates Tat's methylation. Interacts with, and is ubiquitinated by MDM2/Hdm2. Interacts with host PSMC3 and HTATIP2. Interacts with STAB1; this interaction may overcome SATB1-mediated repression of IL2 and IL2RA (interleukin) in T cells by binding to the same domain than HDAC1. Interacts (when acetylated) with human CDK13, thereby increasing HIV-1 mRNA splicing and promoting the production of the doubly spliced HIV-1 protein Nef. Interacts with host TBP; this interaction modulates the activity of transcriptional pre-initiation complex. Interacts with host RELA. Interacts with host PLSCR1; this interaction negatively regulates Tat transactivation activity by altering its subcellular distribution. In terms of processing, asymmetrical arginine methylation by host PRMT6 seems to diminish the transactivation capacity of Tat and affects the interaction with host CCNT1. Post-translationally, acetylation by EP300, CREBBP, GCN5L2/GCN5 and PCAF regulates the transactivation activity of Tat. EP300-mediated acetylation of Lys-50 promotes dissociation of Tat from the TAR RNA through the competitive binding to PCAF's bromodomain. In addition, the non-acetylated Tat's N-terminus can also interact with PCAF. PCAF-mediated acetylation of Lys-28 enhances Tat's binding to CCNT1. Lys-50 is deacetylated by SIRT1. Polyubiquitination by host MDM2 does not target Tat to degradation, but activates its transactivation function and fosters interaction with CCNT1 and TAR RNA. In terms of processing, phosphorylated by EIF2AK2 on serine and threonine residues adjacent to the basic region important for TAR RNA binding and function. Phosphorylation of Tat by EIF2AK2 is dependent on the prior activation of EIF2AK2 by dsRNA.

It is found in the host nucleus. The protein resides in the host nucleolus. It localises to the host cytoplasm. Its subcellular location is the secreted. In terms of biological role, transcriptional activator that increases RNA Pol II processivity, thereby increasing the level of full-length viral transcripts. Recognizes a hairpin structure at the 5'-LTR of the nascent viral mRNAs referred to as the transactivation responsive RNA element (TAR) and recruits the cyclin T1-CDK9 complex (P-TEFb complex) that will in turn hyperphosphorylate the RNA polymerase II to allow efficient elongation. The CDK9 component of P-TEFb and other Tat-activated kinases hyperphosphorylate the C-terminus of RNA Pol II that becomes stabilized and much more processive. Other factors such as HTATSF1/Tat-SF1, SUPT5H/SPT5, and HTATIP2 are also important for Tat's function. Besides its effect on RNA Pol II processivity, Tat induces chromatin remodeling of proviral genes by recruiting the histone acetyltransferases (HATs) CREBBP, EP300 and PCAF to the chromatin. This also contributes to the increase in proviral transcription rate, especially when the provirus integrates in transcriptionally silent region of the host genome. To ensure maximal activation of the LTR, Tat mediates nuclear translocation of NF-kappa-B by interacting with host RELA. Through its interaction with host TBP, Tat may also modulate transcription initiation. Tat can reactivate a latently infected cell by penetrating in it and transactivating its LTR promoter. In the cytoplasm, Tat is thought to act as a translational activator of HIV-1 mRNAs. Functionally, extracellular circulating Tat can be endocytosed by surrounding uninfected cells via the binding to several surface receptors such as CD26, CXCR4, heparan sulfate proteoglycans (HSPG) or LDLR. Neurons are rarely infected, but they internalize Tat via their LDLR. Through its interaction with nuclear HATs, Tat is potentially able to control the acetylation-dependent cellular gene expression. Modulates the expression of many cellular genes involved in cell survival, proliferation or in coding for cytokines or cytokine receptors. Tat plays a role in T-cell and neurons apoptosis. Tat induced neurotoxicity and apoptosis probably contribute to neuroAIDS. Circulating Tat also acts as a chemokine-like and/or growth factor-like molecule that binds to specific receptors on the surface of the cells, affecting many cellular pathways. In the vascular system, Tat binds to ITGAV/ITGB3 and ITGA5/ITGB1 integrins dimers at the surface of endothelial cells and competes with bFGF for heparin-binding sites, leading to an excess of soluble bFGF. This chain is Protein Tat, found in Homo sapiens (Human).